The primary structure comprises 363 residues: Dihydroorotate dehydrogenase (quinone) (363 aa).

FMN is bound by residues 70–74 (AGFDK) and Thr-94. Lys-74 is a substrate binding site. 119 to 123 (NRMGF) serves as a coordination point for substrate. FMN contacts are provided by Asn-147 and Asn-180. Asn-180 serves as a coordination point for substrate. The active-site Nucleophile is the Ser-183. Asn-185 is a substrate binding site. 2 residues coordinate FMN: Lys-216 and Thr-244. 245-246 (NT) contacts substrate. FMN contacts are provided by residues Gly-270, Gly-299, and 320–321 (YT).

This sequence belongs to the dihydroorotate dehydrogenase family. Type 2 subfamily. In terms of assembly, monomer. Requires FMN as cofactor.

The protein localises to the cell membrane. It carries out the reaction (S)-dihydroorotate + a quinone = orotate + a quinol. It participates in pyrimidine metabolism; UMP biosynthesis via de novo pathway; orotate from (S)-dihydroorotate (quinone route): step 1/1. Functionally, catalyzes the conversion of dihydroorotate to orotate with quinone as electron acceptor. In Corynebacterium diphtheriae (strain ATCC 700971 / NCTC 13129 / Biotype gravis), this protein is Dihydroorotate dehydrogenase (quinone).